The following is a 314-amino-acid chain: GTPase Era (314 aa).

Residues 21 to 189 (KSGFVGIIGR…QKTLINLLEP (169 aa)) form the Era-type G domain. Positions 29-36 (GRPNVGKS) are G1. GTP is bound at residue 29-36 (GRPNVGKS). Residues 55 to 59 (QTTRN) are G2. The interval 76-79 (DTPG) is G3. GTP is bound by residues 76-80 (DTPGI) and 138-141 (NKSD). The G4 stretch occupies residues 138 to 141 (NKSD). Residues 168 to 170 (FSA) are G5. The KH type-2 domain maps to 212-296 (IREQILQQTR…YLQLFVKVEP (85 aa)).

This sequence belongs to the TRAFAC class TrmE-Era-EngA-EngB-Septin-like GTPase superfamily. Era GTPase family. As to quaternary structure, monomer.

It is found in the cytoplasm. It localises to the cell inner membrane. An essential GTPase that binds both GDP and GTP, with rapid nucleotide exchange. Plays a role in 16S rRNA processing and 30S ribosomal subunit biogenesis and possibly also in cell cycle regulation and energy metabolism. The chain is GTPase Era from Rippkaea orientalis (strain PCC 8801 / RF-1) (Cyanothece sp. (strain PCC 8801)).